The following is a 154-amino-acid chain: Myoglobin (154 aa).

The region spanning 2-148 (GLSDGEWQLV…FRNDMAAKYK (147 aa)) is the Globin domain. A Phosphoserine modification is found at Ser-4. A nitrite-binding site is contributed by His-65. His-65 is a binding site for O2. The residue at position 68 (Thr-68) is a Phosphothreonine. His-94 serves as a coordination point for heme b.

The protein belongs to the globin family. In terms of assembly, monomeric.

It is found in the cytoplasm. Its subcellular location is the sarcoplasm. The enzyme catalyses Fe(III)-heme b-[protein] + nitric oxide + H2O = Fe(II)-heme b-[protein] + nitrite + 2 H(+). It catalyses the reaction H2O2 + AH2 = A + 2 H2O. In terms of biological role, monomeric heme protein which primary function is to store oxygen and facilitate its diffusion within muscle tissues. Reversibly binds oxygen through a pentacoordinated heme iron and enables its timely and efficient release as needed during periods of heightened demand. Depending on the oxidative conditions of tissues and cells, and in addition to its ability to bind oxygen, it also has a nitrite reductase activity whereby it regulates the production of bioactive nitric oxide. Under stress conditions, like hypoxia and anoxia, it also protects cells against reactive oxygen species thanks to its pseudoperoxidase activity. This is Myoglobin (MB) from Ochotona princeps (Southern American pika).